The sequence spans 315 residues: Calumenin (315 aa).

The first 19 residues, 1-19 (MDLRQFLLCLSLCTAFALS), serve as a signal peptide directing secretion. Position 47 is a phosphotyrosine (Tyr47). Phosphothreonine is present on Thr65. EF-hand domains follow at residues 68-103 (ESKERLGKIVSKIDDDKDGFVTVDELKGWIKFAQKR), 104-139 (WIHEDVERQWKGHDLNEDGLVSWEEYKNATYGYVLD), 151-186 (QMMVRDERRFKMADKDGDLIATKEEFTAFPHPDEYD), 188-223 (MKDIVVQETMEDIDKNADGFIDLEEYIGDMYSHDGN), 229-264 (WVKTEREQFVEFRDKNRDGRMDKEETKDWILPSDYD), and 265-300 (HAEAEARHLVYESDQNKDGKLTKEEIVDKYDLFVGS). Ser69 carries the post-translational modification Phosphoserine. Ca(2+) contacts are provided by Asp81, Asp83, Asp85, Glu92, Asp117, Asn119, Asp121, and Glu128. Residue Asn131 is glycosylated (N-linked (GlcNAc...) asparagine). Asp164 is a Ca(2+) binding site. N6-acetyllysine is present on Lys165. Ca(2+) is bound by residues Asp166, Asp168, Glu175, Asp201, Asn203, Asp205, Glu212, Asp242, Asn244, Asp246, Arg248, and Glu253. Thr254 carries the post-translational modification Phosphothreonine. A phosphoserine mark is found at Ser261 and Ser277. 5 residues coordinate Ca(2+): Asp278, Asn280, Asp282, Lys284, and Glu289. Residues 312–315 (HDEF) carry the Prevents secretion from ER motif.

It belongs to the CREC family. Interacts with GGCX.

The protein localises to the endoplasmic reticulum membrane. It localises to the golgi apparatus. It is found in the secreted. Its subcellular location is the melanosome. The protein resides in the sarcoplasmic reticulum lumen. Involved in regulation of vitamin K-dependent carboxylation of multiple N-terminal glutamate residues. Seems to inhibit gamma-carboxylase GGCX. Binds 7 calcium ions with a low affinity. In Mesocricetus auratus (Golden hamster), this protein is Calumenin (CALU).